Here is a 351-residue protein sequence, read N- to C-terminus: Peptidyl-Lys metalloendopeptidase (351 aa).

A signal peptide spans 1-22; it reads MFSLSSRFFLYSLCLSAVAVSA. Residues 23–183 constitute a propeptide that is removed on maturation; it reads APGLSLSLSG…VARRSNLGKR (161 aa). Intrachain disulfides connect cysteine 189-cysteine 259 and cysteine 261-cysteine 281. Residue histidine 301 coordinates Zn(2+). Residue glutamate 302 is part of the active site. 2 residues coordinate Zn(2+): histidine 305 and aspartate 314.

The protein belongs to the peptidase M35 family. The cofactor is Zn(2+).

Its subcellular location is the secreted. The enzyme catalyses Preferential cleavage in proteins: -Xaa-|-Lys- (in which Xaa may be Pro).. With respect to regulation, inhibited by chelating agents such as imidazole, alpha,alpha'-bipyridine, and 1,10-phenanthroline. In Armillaria mellea (Honey mushroom), this protein is Peptidyl-Lys metalloendopeptidase (MEP).